Reading from the N-terminus, the 471-residue chain is Ribulose bisphosphate carboxylase large chain (471 aa).

Lys-5 is modified (N6,N6,N6-trimethyllysine). Substrate is bound by residues Asn-114 and Thr-164. Lys-166 functions as the Proton acceptor in the catalytic mechanism. Lys-168 contacts substrate. The Mg(2+) site is built by Lys-192, Asp-194, and Glu-195. Residue Lys-192 is modified to N6-carboxylysine. Catalysis depends on His-285, which acts as the Proton acceptor. Substrate is bound by residues Arg-286, His-318, and Ser-370.

It belongs to the RuBisCO large chain family. Type I subfamily. In terms of assembly, heterohexadecamer of 8 large chains and 8 small chains; disulfide-linked. The disulfide link is formed within the large subunit homodimers. It depends on Mg(2+) as a cofactor. The disulfide bond which can form in the large chain dimeric partners within the hexadecamer appears to be associated with oxidative stress and protein turnover.

The protein localises to the plastid. Its subcellular location is the chloroplast. It catalyses the reaction 2 (2R)-3-phosphoglycerate + 2 H(+) = D-ribulose 1,5-bisphosphate + CO2 + H2O. It carries out the reaction D-ribulose 1,5-bisphosphate + O2 = 2-phosphoglycolate + (2R)-3-phosphoglycerate + 2 H(+). RuBisCO catalyzes two reactions: the carboxylation of D-ribulose 1,5-bisphosphate, the primary event in carbon dioxide fixation, as well as the oxidative fragmentation of the pentose substrate in the photorespiration process. Both reactions occur simultaneously and in competition at the same active site. In Strychnos nux-vomica (Poison nut), this protein is Ribulose bisphosphate carboxylase large chain.